Here is a 118-residue protein sequence, read N- to C-terminus: MSRHSRLQRQVLSLYRELLRAGRGKPGAEARVRAEFRQHACLPRSDVLRIEYLYRRGRRQLQMLRSGHATAMGAFVRTRGPTEESNGAGAPGTLSGEGDDPRKPLDSMRTPKTPLDGR.

An LYR motif 1; required for interaction with HSC20 motif is present at residues 14–16 (LYR). The LYR motif 2; not required for interaction with HSC20 signature appears at 53 to 55 (LYR). Positions 53 to 65 (LYRRGRRQLQMLR) are interaction with SDHB. The segment at 72-118 (MGAFVRTRGPTEESNGAGAPGTLSGEGDDPRKPLDSMRTPKTPLDGR) is disordered.

It belongs to the complex I LYR family. SDHAF1 subfamily. Interacts with SDHB within an SDHA-SDHB subcomplex. Also interacts with the iron-sulfur transfer complex formed by HSC20, HSPA9 and ISCU through direct binding to HSC20. Binding of SDHAF1 to SDHB precedes and is necessary for recruitment of the iron-sulfur transfer complex by SDHAF1.

The protein localises to the mitochondrion matrix. Its function is as follows. Plays an essential role in the assembly of succinate dehydrogenase (SDH), an enzyme complex (also referred to as respiratory complex II) that is a component of both the tricarboxylic acid (TCA) cycle and the mitochondrial electron transport chain, and which couples the oxidation of succinate to fumarate with the reduction of ubiquinone (coenzyme Q) to ubiquinol. Promotes maturation of the iron-sulfur protein subunit SDHB of the SDH catalytic dimer, protecting it from the deleterious effects of oxidants. May act together with SDHAF3. Contributes to iron-sulfur cluster incorporation into SDHB by binding to SDHB and recruiting the iron-sulfur transfer complex formed by HSC20, HSPA9 and ISCU through direct binding to HSC20. This chain is Succinate dehydrogenase assembly factor 1, mitochondrial, found in Bos taurus (Bovine).